Reading from the N-terminus, the 323-residue chain is Mediator of RNA polymerase II transcription subunit 4 (323 aa).

The tract at residues 1–36 (MLPFKKADSPFKSNPVSRVGSSTRLNQLGNIKSNPT) is disordered. Residues 11–36 (FKSNPVSRVGSSTRLNQLGNIKSNPT) are compositionally biased toward polar residues. The stretch at 79–167 (MVQKVNEYER…VSYRNELKKL (89 aa)) forms a coiled coil. Basic and acidic residues-rich tracts occupy residues 241–262 (HELG…KVDH) and 282–303 (DEQR…KEEQ). Positions 241–323 (HELGETDKEN…LFDPDDEYSD (83 aa)) are disordered.

It belongs to the Mediator complex subunit 4 family. As to quaternary structure, component of the Mediator complex.

The protein resides in the nucleus. In terms of biological role, component of the Mediator complex, a coactivator involved in the regulated transcription of nearly all RNA polymerase II-dependent genes. Mediator functions as a bridge to convey information from gene-specific regulatory proteins to the basal RNA polymerase II transcription machinery. Mediator is recruited to promoters by direct interactions with regulatory proteins and serves as a scaffold for the assembly of a functional preinitiation complex with RNA polymerase II and the general transcription factors. This Candida albicans (strain SC5314 / ATCC MYA-2876) (Yeast) protein is Mediator of RNA polymerase II transcription subunit 4 (MED4).